The sequence spans 382 residues: MEPVECPRGLLPRPCRVLVLLNPQGGKGKALQLFQSRVQPFLEEAEITFKLILTERKNHARELVCAEELGHWDALAVMSGDGLMHEVVNGLMERPDWETAIQKPLCSLPGGSGNALAASVNHYAGYEQVTNEDLLINCTLLLCRRRLSPMNLLSLHTASGLRLYSVLSLSWGFVADVDLESEKYRRLGEIRFTVGTFFRLASLRIYQGQLAYLPVGTVASKRPASTLVQKGPVDTHLVPLEEPVPSHWTVVPEQDFVLVLVLLHTHLSSELFAAPMGRCEAGVMHLFYVRAGVSRAALLRLFLAMQKGKHMELDCPYLVHVPVVAFRLEPRSQRGVFSVDGELMVCEAVQGQVHPNYLWMVCGSRDAPSGRDSRRGPPPEEP.

Residues proline 12 to serine 159 enclose the DAGKc domain. ATP contacts are provided by residues asparagine 22–glutamine 24 and threonine 54–asparagine 58. Serine 79 to glycine 82 serves as a coordination point for substrate. Residue aspartate 81 is the Proton donor/acceptor of the active site. ATP-binding positions include glutamate 86 and glycine 111–glycine 113. Short sequence motifs (nuclear export signal) lie at residues leucine 147–leucine 155 and leucine 161–leucine 169. Aspartate 178 is a substrate binding site. Residues arginine 185 and arginine 191 each contribute to the ATP site. A Phosphothreonine modification is found at threonine 193. Serine 225 is subject to Phosphoserine. Aspartate 340–glutamate 342 contacts ATP.

As to quaternary structure, interacts with ACY1. Binds to calmodulin. Interacts with SPHKAP. Interacts with CIB1, the interaction occurs in a calcium-dependent manner. Interacts with TRAF2. Interacts with EEF1A1; the interaction enhances SPHK1 kinase activity. Requires Mg(2+) as cofactor. Widely expressed. Expressed in brain (at protein level). Detected in neurons.

The protein localises to the cytoplasm. It is found in the endosome membrane. It localises to the nucleus. Its subcellular location is the cell membrane. The protein resides in the synapse. The enzyme catalyses a sphingoid base + ATP = a sphingoid 1-phosphate + ADP + H(+). It carries out the reaction L-seryl-[protein] + acetyl-CoA = O-acetyl-L-seryl-[protein] + CoA. It catalyses the reaction sphinganine + ATP = sphinganine 1-phosphate + ADP + H(+). The catalysed reaction is sphing-4-enine + ATP = sphing-4-enine 1-phosphate + ADP + H(+). The enzyme catalyses 1-O-hexadecyl-2-amino-sn-glycerol + ATP = 1-O-hexadecyl-2-desoxy-2-amino-sn-glycero-3-phosphate + ADP + H(+). With respect to regulation, acetyltransferase activity increases in presence of the kinase substrate, sphingosine. In Purkinje cells, kinase activity on sphingosine increases in presence of VEGFA. In neurons, kinase activity increases during the first 24h in presence of Amyloid-beta protein 42 to decrease after 96h. In terms of biological role, catalyzes the phosphorylation of sphingosine to form sphingosine 1-phosphate (SPP), a lipid mediator with both intra- and extracellular functions. Also acts on D-erythro-sphingosine and to a lesser extent sphinganine, but not other lipids, such as D,L-threo-dihydrosphingosine, N,N-dimethylsphingosine, diacylglycerol, ceramide, or phosphatidylinositol. In contrast to proapoptotic SPHK2, has a negative effect on intracellular ceramide levels, enhances cell growth and inhibits apoptosis. Involved in the regulation of inflammatory response and neuroinflammation. Via the product sphingosine 1-phosphate, stimulates TRAF2 E3 ubiquitin ligase activity, and promotes activation of NF-kappa-B in response to TNF signaling. In response to TNF and in parallel to NF-kappa-B activation, negatively regulates RANTES induction through p38 MAPK signaling pathway. Involved in endocytic membrane trafficking induced by sphingosine, recruited to dilate endosomes, also plays a role on later stages of endosomal maturation and membrane fusion independently of its kinase activity. In Purkinje cells, seems to be also involved in the regulation of autophagosome-lysosome fusion upon VEGFA. Functionally, has serine acetyltransferase activity on PTGS2/COX2 in an acetyl-CoA dependent manner. The acetyltransferase activity increases in presence of the kinase substrate, sphingosine. During neuroinflammation, through PTGS2 acetylation, promotes neuronal secretion of specialized preresolving mediators (SPMs), especially 15-R-lipoxin A4, which results in an increase of phagocytic microglia. In Mus musculus (Mouse), this protein is Sphingosine kinase 1.